We begin with the raw amino-acid sequence, 425 residues long: Trigger factor (425 aa).

In terms of domain architecture, PPIase FKBP-type spans 158–231; it reads GDLVRVNMEV…VEEVYKRTLP (74 aa).

This sequence belongs to the FKBP-type PPIase family. Tig subfamily.

It localises to the cytoplasm. The catalysed reaction is [protein]-peptidylproline (omega=180) = [protein]-peptidylproline (omega=0). In terms of biological role, involved in protein export. Acts as a chaperone by maintaining the newly synthesized protein in an open conformation. Functions as a peptidyl-prolyl cis-trans isomerase. This is Trigger factor from Thermotoga petrophila (strain ATCC BAA-488 / DSM 13995 / JCM 10881 / RKU-1).